A 432-amino-acid chain; its full sequence is Trigger factor (432 aa).

The region spanning 161 to 246 is the PPIase FKBP-type domain; the sequence is GTRATINFVG…VVKVEARELP (86 aa).

The protein belongs to the FKBP-type PPIase family. Tig subfamily.

The protein localises to the cytoplasm. The enzyme catalyses [protein]-peptidylproline (omega=180) = [protein]-peptidylproline (omega=0). Functionally, involved in protein export. Acts as a chaperone by maintaining the newly synthesized protein in an open conformation. Functions as a peptidyl-prolyl cis-trans isomerase. In Aliivibrio fischeri (strain MJ11) (Vibrio fischeri), this protein is Trigger factor.